A 978-amino-acid polypeptide reads, in one-letter code: Monofunctional C1-tetrahydrofolate synthase, mitochondrial (978 aa).

Low complexity predominate over residues 1–10 (MGTRLPLVLR). The N-terminal 31 residues, 1–31 (MGTRLPLVLRQLRRPPQPPGPPRRLRVPCRA), are a transit peptide targeting the mitochondrion. The disordered stretch occupies residues 1-71 (MGTRLPLVLR…SPGGRTPAAR (71 aa)). Positions 31 to 348 (ASSGGGGGGG…REQQHRRWRL (318 aa)) are methylenetetrahydrofolate dehydrogenase and cyclohydrolase. Residues 33–45 (SGGGGGGGGGREG) are compositionally biased toward gly residues. Lys189 bears the N6-acetyllysine; alternate mark. N6-succinyllysine; alternate is present on Lys189. The interval 349–978 (HCLKLQPLSP…TETEQVKGLF (630 aa)) is formyltetrahydrofolate synthetase. Ser357 is subject to Phosphoserine. Residue 423–430 (TPLGEGKS) coordinates ATP. Lys596 is subject to N6-succinyllysine.

In the N-terminal section; belongs to the tetrahydrofolate dehydrogenase/cyclohydrolase family. This sequence in the C-terminal section; belongs to the formate--tetrahydrofolate ligase family. In terms of assembly, homodimer. Detected in most tissues, highest expression found in placenta, thymus and brain. Low expression is found in liver and skeletal muscle. Up-regulated in colon adenocarcinoma.

The protein localises to the mitochondrion. It carries out the reaction (6S)-5,6,7,8-tetrahydrofolate + formate + ATP = (6R)-10-formyltetrahydrofolate + ADP + phosphate. Its pathway is one-carbon metabolism; tetrahydrofolate interconversion. May provide the missing metabolic reaction required to link the mitochondria and the cytoplasm in the mammalian model of one-carbon folate metabolism complementing thus the enzymatic activities of MTHFD2. This is Monofunctional C1-tetrahydrofolate synthase, mitochondrial from Homo sapiens (Human).